Reading from the N-terminus, the 258-residue chain is Snake venom serine protease BPA (258 aa).

The first 18 residues, 1–18 (MVLIRVIANLLILQLSNA), serve as a signal peptide directing secretion. Positions 19–24 (QKSSEL) are excised as a propeptide. Positions 25-249 (VIGGDECNIT…YLPWIQSIIA (225 aa)) constitute a Peptidase S1 domain. 6 disulfide bridges follow: Cys-31/Cys-163, Cys-50/Cys-66, Cys-98/Cys-256, Cys-142/Cys-210, Cys-174/Cys-189, and Cys-200/Cys-225. N-linked (GlcNAc...) asparagine glycans are attached at residues Asn-32 and Asn-44. Catalysis depends on His-65, which acts as the Charge relay system. Asn-103 carries an N-linked (GlcNAc...) asparagine glycan. Residue Asp-110 is the Charge relay system of the active site. Asn-121 is a glycosylation site (N-linked (GlcNAc...) asparagine). A glycan (O-linked (GalNAc...) serine) is linked at Ser-133. N-linked (GlcNAc...) asparagine glycosylation is found at Asn-154 and Asn-170. Catalysis depends on Ser-204, which acts as the Charge relay system. N-linked (GlcNAc...) asparagine glycans are attached at residues Asn-211 and Asn-251. O-linked (GalNAc...) threonine glycosylation is present at Thr-255.

Belongs to the peptidase S1 family. Snake venom subfamily. As to quaternary structure, monomer. In terms of processing, N- and O-glycosylated. The glycosylation has a stabilizing effect on the protein. However, the removal of part of the carbohydrates enhances the proteolytic activity of the SVSP towards human and rat fibrinogen. Expressed by the venom gland.

Its subcellular location is the secreted. Its activity is regulated as follows. Inhibited by diisopropylfluorophosphate (DFP), but not by SBTI, Antithrombin III/heparin and BPTI, probably due to steric hindrance caused by its huge carbohydrate moietie. In terms of biological role, snake venom serine protease that has a potent and selective fibrinogenolytic activity. Preferentially cleaves the alpha-chain (FGA) of human and rat fibrinogen at Arg-|-Gly bonds, and slowly digests the beta-chain (FGB). In vivo, completely avoids thrombus formation induced in rat, decreases the fibrinogen plasma level and prolonges the recalcification time. Possesses esterolytic and amidolytic activities. The polypeptide is Snake venom serine protease BPA (Bothrops jararaca (Jararaca)).